A 213-amino-acid polypeptide reads, in one-letter code: MTDQSHQCVIIGIAGASASGKSLIASTLYRELREQVGDEHIGVIPEDSYYKDQSHLSMEERVKTNYDHPNAMDHSLLFLHLQALKRGSAIELPVYSYVEHTRMQETVRVEPKKVIILEGILLLTDARLREEMNFSIFVDTPLDICLMRRIKRDVNERGRSMDSVMAQYQKTVRPMFLQFIEPSKQYADIIVPRGGKNRIAIDILKAKISQFFE.

15-22 (GASASGKS) serves as a coordination point for ATP.

This sequence belongs to the uridine kinase family.

It localises to the cytoplasm. It catalyses the reaction uridine + ATP = UMP + ADP + H(+). It carries out the reaction cytidine + ATP = CMP + ADP + H(+). It functions in the pathway pyrimidine metabolism; CTP biosynthesis via salvage pathway; CTP from cytidine: step 1/3. Its pathway is pyrimidine metabolism; UMP biosynthesis via salvage pathway; UMP from uridine: step 1/1. This Salmonella newport (strain SL254) protein is Uridine kinase.